The sequence spans 368 residues: Flavanone 3-dioxygenase (368 aa).

A Fe2OG dioxygenase domain is found at 191–295; the sequence is CVDMDQKVIV…RMSIATFQNP (105 aa). Fe cation contacts are provided by His218, Asp220, and His276. A 2-oxoglutarate-binding site is contributed by Arg286.

It belongs to the iron/ascorbate-dependent oxidoreductase family. The cofactor is Fe(2+). It depends on L-ascorbate as a cofactor.

The enzyme catalyses a (2S)-flavan-4-one + 2-oxoglutarate + O2 = a (2R,3R)-dihydroflavonol + succinate + CO2. It participates in secondary metabolite biosynthesis; flavonoid biosynthesis. Its function is as follows. Involved in the conversion of (2S)-naringenin to (+)-(2R/3R)-dihydrokaempferol. The polypeptide is Flavanone 3-dioxygenase (FHT) (Petroselinum crispum (Parsley)).